We begin with the raw amino-acid sequence, 253 residues long: Sugar fermentation stimulation protein homolog (253 aa).

This sequence belongs to the SfsA family.

This is Sugar fermentation stimulation protein homolog from Chromohalobacter salexigens (strain ATCC BAA-138 / DSM 3043 / CIP 106854 / NCIMB 13768 / 1H11).